We begin with the raw amino-acid sequence, 982 residues long: Serine/threonine-protein kinase PknD (982 aa).

Positions 51 to 342 (YQIIKSIGKG…ELIRDIENYL (292 aa)) constitute a Protein kinase domain. Residues 57 to 65 (IGKGGMGEV) and Lys80 each bind ATP. Catalysis depends on Asp186, which acts as the Proton acceptor.

This sequence belongs to the protein kinase superfamily. Ser/Thr protein kinase family. In terms of processing, autophosphorylated on serine and threonine residues.

It catalyses the reaction L-seryl-[protein] + ATP = O-phospho-L-seryl-[protein] + ADP + H(+). The enzyme catalyses L-threonyl-[protein] + ATP = O-phospho-L-threonyl-[protein] + ADP + H(+). In terms of biological role, together with the serine/threonine kinase Pkn1, may play a role in the specific interactions with host proteins during intracellular growth. The sequence is that of Serine/threonine-protein kinase PknD from Protochlamydia amoebophila (strain UWE25).